Here is a 471-residue protein sequence, read N- to C-terminus: Ribulose bisphosphate carboxylase large chain 2 (471 aa).

The substrate site is built by Asn116 and Thr166. Lys168 serves as the catalytic Proton acceptor. Lys170 is a binding site for substrate. Residues Lys194, Asp196, and Glu197 each contribute to the Mg(2+) site. Lys194 carries the N6-carboxylysine modification. The active-site Proton acceptor is the His287. Substrate is bound by residues Arg288, His320, and Ser372.

This sequence belongs to the RuBisCO large chain family. Type I subfamily. In terms of assembly, heterohexadecamer of 8 large chains and 8 small chains. Mg(2+) serves as cofactor.

The protein localises to the carboxysome. It catalyses the reaction 2 (2R)-3-phosphoglycerate + 2 H(+) = D-ribulose 1,5-bisphosphate + CO2 + H2O. The catalysed reaction is D-ribulose 1,5-bisphosphate + O2 = 2-phosphoglycolate + (2R)-3-phosphoglycerate + 2 H(+). In terms of biological role, ruBisCO catalyzes two reactions: the carboxylation of D-ribulose 1,5-bisphosphate, the primary event in carbon dioxide fixation, as well as the oxidative fragmentation of the pentose substrate. Both reactions occur simultaneously and in competition at the same active site. The chain is Ribulose bisphosphate carboxylase large chain 2 from Hydrogenovibrio marinus.